We begin with the raw amino-acid sequence, 315 residues long: 4-hydroxy-3-methylbut-2-enyl diphosphate reductase (315 aa).

C12 is a [4Fe-4S] cluster binding site. Residues H43 and H81 each contribute to the (2E)-4-hydroxy-3-methylbut-2-enyl diphosphate site. Residues H43 and H81 each contribute to the dimethylallyl diphosphate site. Isopentenyl diphosphate contacts are provided by H43 and H81. C103 serves as a coordination point for [4Fe-4S] cluster. H131 is a binding site for (2E)-4-hydroxy-3-methylbut-2-enyl diphosphate. Dimethylallyl diphosphate is bound at residue H131. H131 serves as a coordination point for isopentenyl diphosphate. The Proton donor role is filled by E133. Residue T172 participates in (2E)-4-hydroxy-3-methylbut-2-enyl diphosphate binding. Residue C200 participates in [4Fe-4S] cluster binding. The (2E)-4-hydroxy-3-methylbut-2-enyl diphosphate site is built by S228, N230, and S273. Positions 228, 230, and 273 each coordinate dimethylallyl diphosphate. Positions 228, 230, and 273 each coordinate isopentenyl diphosphate.

This sequence belongs to the IspH family. The cofactor is [4Fe-4S] cluster.

The catalysed reaction is isopentenyl diphosphate + 2 oxidized [2Fe-2S]-[ferredoxin] + H2O = (2E)-4-hydroxy-3-methylbut-2-enyl diphosphate + 2 reduced [2Fe-2S]-[ferredoxin] + 2 H(+). The enzyme catalyses dimethylallyl diphosphate + 2 oxidized [2Fe-2S]-[ferredoxin] + H2O = (2E)-4-hydroxy-3-methylbut-2-enyl diphosphate + 2 reduced [2Fe-2S]-[ferredoxin] + 2 H(+). The protein operates within isoprenoid biosynthesis; dimethylallyl diphosphate biosynthesis; dimethylallyl diphosphate from (2E)-4-hydroxy-3-methylbutenyl diphosphate: step 1/1. It participates in isoprenoid biosynthesis; isopentenyl diphosphate biosynthesis via DXP pathway; isopentenyl diphosphate from 1-deoxy-D-xylulose 5-phosphate: step 6/6. Functionally, catalyzes the conversion of 1-hydroxy-2-methyl-2-(E)-butenyl 4-diphosphate (HMBPP) into a mixture of isopentenyl diphosphate (IPP) and dimethylallyl diphosphate (DMAPP). Acts in the terminal step of the DOXP/MEP pathway for isoprenoid precursor biosynthesis. This is 4-hydroxy-3-methylbut-2-enyl diphosphate reductase from Exiguobacterium sibiricum (strain DSM 17290 / CCUG 55495 / CIP 109462 / JCM 13490 / 255-15).